Reading from the N-terminus, the 589-residue chain is Aspartate--tRNA ligase 2 (589 aa).

Glu-174 provides a ligand contact to L-aspartate. The segment at 198–201 (QITK) is aspartate. Arg-220 serves as a coordination point for L-aspartate. ATP is bound by residues 220-222 (RDE) and Gln-229. His-443 contacts L-aspartate. Residue Glu-477 coordinates ATP. Residue Arg-484 coordinates L-aspartate. Residue 529–532 (GLDR) coordinates ATP.

The protein belongs to the class-II aminoacyl-tRNA synthetase family. Type 1 subfamily. Homodimer.

The protein localises to the cytoplasm. It catalyses the reaction tRNA(Asp) + L-aspartate + ATP = L-aspartyl-tRNA(Asp) + AMP + diphosphate. Its function is as follows. Catalyzes the attachment of L-aspartate to tRNA(Asp) in a two-step reaction: L-aspartate is first activated by ATP to form Asp-AMP and then transferred to the acceptor end of tRNA(Asp). In Streptococcus mutans serotype c (strain ATCC 700610 / UA159), this protein is Aspartate--tRNA ligase 2.